A 973-amino-acid chain; its full sequence is MADDDPFGTGQMFHLNTALTHSIFNAELYSTDIPLSTADGPYLQILEQPKQRGFRFRYVCEGPSHGGLPGASSEKNKKSYPQVKICNYVGPAKVIVQLVTNGKNIHLHAHSLVGKHCEDGICTVTAGPKDMVVGFANLGILHVTKKKVFETLEARMTEACIRGYNPGLLVHSDLAYLQAEGGGDRQLTDREKEIIRQAALQQTKEMDLSVVRLMFTAFLPDSTGSFTRRLEPVVSDAIYDSKAPNASNLKIVRMDRTAGCVTGGEEIYLLCDKVQKDDIQIRFYEEEENGGVWEGFGDFSPTDVHRQFAIVFKTPKYKDVNITKPASVFVQLRRKSDLETSEPKPFLYYPEIKDKEEVQRKRQKLMPNFSDSFGGGSGAGAGGGGMFGSGGGGGGSTGSPGPGYGFPHYGFPAYGGIAFHPGATKSNTGITHGTINTKFKNEPRDCAKSDDREILNPPEKETQGEGPSLFMASTKTEAIAPASTMEDKEEDVGFQDNLFLEKALQLAKRHANALFDYAVTGDVKMLLAVQRHLTAVQDENGDSVLHLAIIHLHAQLVRDLLEVTSGSISDDIINMRNDLYQTPLHLAVITKQEDVVEDLLRVGADLSLLDRWGNSVLHLAAKEGHDKILGVLLKNSKAALLINHPNGEGLNAIHIAVMSNSLSCLQLLVAAGAEVNAQEQKSGRTALHLAVEYDNISLAGCLLLEGDALVDSTTYDGTTPLHIAAGRGSTRLAALLKAAGADPLVENFEPLYDLDDSWEKAGEDEGVVPGTTPLDMAANWQVFDILNGKPYEPVFTSDDILPQGDIKQLTEDTRLQLCKLLEIPDPDKNWATLAQKLGLGILNNAFRLSPAPSKTLMDNYEVSGGTIKELVEALRQMGYTEAIEVIQAAFRTPETTASSPVTTAQAHLLPLSSSSTRQHIDELRDNDSVCDSGVETSFRKLSFSESLTGDGPLLSLNKMPHNYGQDGPIEGKI.

In terms of domain architecture, RHD spans 38-245 (ADGPYLQILE…DAIYDSKAPN (208 aa)). C60 carries the S-nitrosocysteine; alternate modification. C60 carries the S-(15-deoxy-Delta12,14-prostaglandin J2-9-yl)cysteine; alternate lipid modification. K324 is covalently cross-linked (Glycyl lysine isopeptide (Lys-Gly) (interchain with G-Cter in SUMO2)). S336 is subject to Phosphoserine. A Nuclear localization signal motif is present at residues 359–364 (QRKRQK). The interval 371-394 (DSFGGGSGAGAGGGGMFGSGGGGG) is GRR. A disordered region spans residues 434–467 (TINTKFKNEPRDCAKSDDREILNPPEKETQGEGP). The tract at residues 435–973 (INTKFKNEPR…GQDGPIEGKI (539 aa)) is interaction with CFLAR. Residues 439–463 (FKNEPRDCAKSDDREILNPPEKETQ) are compositionally biased toward basic and acidic residues. N6-acetyllysine is present on K440. S449 bears the Phosphoserine mark. ANK repeat units lie at residues 540–570 (NGDS…SISD), 579–608 (LYQT…DLSL), 612–641 (WGNS…AALL), 648–677 (EGLN…EVNA), 682–711 (SGRT…ALVD), and 716–745 (DGTT…DPLV). Residues 648–682 (EGLNAIHIAVMSNSLSCLQLLVAAGAEVNAQEQKS) are essential for interaction with HIF1AN. N676 is modified ((3S)-3-hydroxyasparagine; by HIF1AN). Residue S757 is modified to Phosphoserine. Residues 769 to 799 (PGTTPLDMAANWQVFDILNGKPYEPVFTSDD) form an ANK 7 repeat. The region spanning 803-890 (QGDIKQLTED…EAIEVIQAAF (88 aa)) is the Death domain. At S898 the chain carries Phosphoserine. At S912 the chain carries Phosphoserine; by GSK3-beta; in vitro. The residue at position 928 (S928) is a Phosphoserine. Residues S932 and S937 each carry the phosphoserine; by IKKB modification. At S942 the chain carries Phosphoserine. T948 bears the Phosphothreonine mark.

As to quaternary structure, component of the NF-kappa-B p65-p50 complex. Homodimer; component of the NF-kappa-B p50-p50 complex. Component of the NF-kappa-B p105-p50 complex. Component of the NF-kappa-B p50-c-Rel complex. Component of a complex consisting of the NF-kappa-B p50-p50 homodimer and BCL3. Also interacts with MAP3K8. NF-kappa-B p50 subunit interacts with NCOA3 coactivator, which may coactivate NF-kappa-B dependent expression via its histone acetyltransferase activity. Interacts with TSC22D3; this interaction prevents nuclear translocation and DNA-binding. Interacts with SPAG9 and UNC5CL. NFKB1/p105 interacts with CFLAR; the interaction inhibits p105 processing into p50. NFKB1/p105 forms a ternary complex with MAP3K8 and TNIP2. Interacts with GSK3B; the interaction prevents processing of p105 to p50. NFKB1/p50 interacts with NFKBIE. NFKB1/p50 interacts with NFKBIZ. Nuclear factor NF-kappa-B p50 subunit interacts with NFKBID. Directly interacts with MEN1. Interacts with HIF1AN. Interacts with FEM1A; interaction is direct. In terms of processing, generation of the NF-kappa-B p50 (Nuclear factor NF-kappa-B p50 subunit) transcription factor takes place both cotranslationally and post-translationally via non-mutually exclusive mechanisms. A cotranslational processing allows the production of both p50 and p105 (Nuclear factor NF-kappa-B p105 subunit) from a single NFKB1 mRNA. While translation occurs, the particular unfolded structure after the GRR repeat region acts as a substrate for the proteasome, promoting degradation of the C-terminus. The GRR acts as a proteasomal 'stop signal', protecting the region upstream of the GRR from degradation and promoting generation of p50. It is unclear if limited proteasome degradation during cotranslational processing depends on ubiquitination. NF-kappa-B p50 is also generated post-translationally following ubiquitination by the KPC complex, leading to limited processing by the proteasome downstream of the GRR region, thereby generating p50. Phosphorylation at the C-terminus by IKBKB/IKKB acts as a signal for ubiquitination and promotes either complete degradation or processing to generate the NF-kappa-B p50 (Nuclear factor NF-kappa-B p50 subunit). Phosphorylation at Ser-912 primes p105 for proteolytic processing in response to TNF-alpha stimulation. Phosphorylation at Ser-928, Ser-932 and Ser-937 are required for BTRC/BTRCP-mediated ubiquitination and proteolysis. Phosphorylation at Ser-932 is also required for ubiquitination by the KPC complex and limited processing to generate NF-kappa-B p50 (Nuclear factor NF-kappa-B p50 subunit). Post-translationally, polyubiquitinated at multiple Lys residues in the C-terminus. Polyubiquitinated by the SCF(FBXW11) and SCF(BTRC) complexes following phosphorylation at Ser-928, Ser-932 and Ser-937, leading to its complete degradation. In contrast, polyubiquitination by the KPC complex following phosphorylation at Ser-932 leads to limited proteosomal processing and generation of the active NF-kappa-B p50 (Nuclear factor NF-kappa-B p50 subunit). In terms of processing, S-nitrosylation of Cys-60 affects DNA binding. The covalent modification of cysteine by 15-deoxy-Delta12,14-prostaglandin-J2 is autocatalytic and reversible. It may occur as an alternative to other cysteine modifications, such as S-nitrosylation and S-palmitoylation.

It localises to the cytoplasm. It is found in the nucleus. Its function is as follows. NF-kappa-B is a pleiotropic transcription factor present in almost all cell types and is the endpoint of a series of signal transduction events that are initiated by a vast array of stimuli related to many biological processes such as inflammation, immunity, differentiation, cell growth, tumorigenesis and apoptosis. NF-kappa-B is a homo- or heterodimeric complex formed by the Rel-like domain-containing proteins RELA/p65, RELB, NFKB1/p105, NFKB1/p50, REL and NFKB2/p52 and the heterodimeric p65-p50 complex appears to be most abundant one. The dimers bind at kappa-B sites in the DNA of their target genes and the individual dimers have distinct preferences for different kappa-B sites that they can bind with distinguishable affinity and specificity. Different dimer combinations act as transcriptional activators or repressors, respectively. NF-kappa-B is controlled by various mechanisms of post-translational modification and subcellular compartmentalization as well as by interactions with other cofactors or corepressors. NF-kappa-B complexes are held in the cytoplasm in an inactive state complexed with members of the NF-kappa-B inhibitor (I-kappa-B) family. In a conventional activation pathway, I-kappa-B is phosphorylated by I-kappa-B kinases (IKKs) in response to different activators, subsequently degraded thus liberating the active NF-kappa-B complex which translocates to the nucleus. NF-kappa-B heterodimeric p65-p50 and RelB-p50 complexes are transcriptional activators. The NF-kappa-B p50-p50 homodimer is a transcriptional repressor, but can act as a transcriptional activator when associated with BCL3. NFKB1 appears to have dual functions such as cytoplasmic retention of attached NF-kappa-B proteins by p105 and generation of p50 by a cotranslational processing. The proteasome-mediated process ensures the production of both p50 and p105 and preserves their independent function, although processing of NFKB1/p105 also appears to occur post-translationally. p50 binds to the kappa-B consensus sequence 5'-GGRNNYYCC-3', located in the enhancer region of genes involved in immune response and acute phase reactions. In a complex with MAP3K8, NFKB1/p105 represses MAP3K8-induced MAPK signaling; active MAP3K8 is released by proteasome-dependent degradation of NFKB1/p105. Functionally, P105 is the precursor of the active p50 subunit (Nuclear factor NF-kappa-B p50 subunit) of the nuclear factor NF-kappa-B. Acts as a cytoplasmic retention of attached NF-kappa-B proteins by p105. Constitutes the active form, which associates with RELA/p65 to form the NF-kappa-B p65-p50 complex to form a transcription factor. Together with RELA/p65, binds to the kappa-B consensus sequence 5'-GGRNNYYCC-3', located in the enhancer region of genes involved in immune response and acute phase reactions. This is Nuclear factor NF-kappa-B p105 subunit (Nfkb1) from Rattus norvegicus (Rat).